The chain runs to 1551 residues: Pentafunctional AROM polypeptide (1551 aa).

The 3-dehydroquinate synthase stretch occupies residues 1 to 379; it reads MSIEKVPILG…YQLKAHQVSK (379 aa). NAD(+) is bound by residues 42-44, 80-83, 111-113, and Asp116; these read DTN, ENNK, and GGV. Arg127 serves as a coordination point for 7-phospho-2-dehydro-3-deoxy-D-arabino-heptonate. 136–137 provides a ligand contact to NAD(+); that stretch reads TT. Positions 143 and 149 each coordinate 7-phospho-2-dehydro-3-deoxy-D-arabino-heptonate. Lys158 is a binding site for NAD(+). Asn159 serves as a coordination point for 7-phospho-2-dehydro-3-deoxy-D-arabino-heptonate. NAD(+)-binding positions include 176 to 179 and Asn187; that span reads FLET. Residue Glu191 coordinates Zn(2+). 7-phospho-2-dehydro-3-deoxy-D-arabino-heptonate is bound by residues 191-194 and Lys243; that span reads EVVK. The Proton acceptor; for 3-dehydroquinate synthase activity role is filled by Glu253. 7-phospho-2-dehydro-3-deoxy-D-arabino-heptonate contacts are provided by residues 257–261 and His264; that span reads RNLLN. His264 contacts Zn(2+). The active-site Proton acceptor; for 3-dehydroquinate synthase activity is the His268. 7-phospho-2-dehydro-3-deoxy-D-arabino-heptonate contacts are provided by His280 and Lys351. His280 contributes to the Zn(2+) binding site. The tract at residues 392 to 838 is EPSP synthase; the sequence is VHPFTNPPKE…WDILHSKFKI (447 aa). The interval 858 to 1048 is shikimate kinase; that stretch reads DKSIIVIGMR…VPAGRSAAVV (191 aa). Residue 865 to 872 participates in ATP binding; it reads GMRGTGKS. Positions 1049 to 1258 are 3-dehydroquinase; the sequence is LTSPDLNEVV…NDEEFLTIGE (210 aa). Residue Arg1194 is the Schiff-base intermediate with substrate; for 3-dehydroquinate dehydratase activity of the active site. Residues 1271–1551 are shikimate dehydrogenase; it reads AKKFWVIGSP…EIIHRAVVEE (281 aa).

This sequence in the N-terminal section; belongs to the sugar phosphate cyclases superfamily. Dehydroquinate synthase family. It in the 2nd section; belongs to the EPSP synthase family. In the 3rd section; belongs to the shikimate kinase family. The protein in the 4th section; belongs to the type-I 3-dehydroquinase family. This sequence in the C-terminal section; belongs to the shikimate dehydrogenase family. In terms of assembly, homodimer. Zn(2+) is required as a cofactor.

Its subcellular location is the cytoplasm. It carries out the reaction 7-phospho-2-dehydro-3-deoxy-D-arabino-heptonate = 3-dehydroquinate + phosphate. It catalyses the reaction 3-dehydroquinate = 3-dehydroshikimate + H2O. The catalysed reaction is shikimate + NADP(+) = 3-dehydroshikimate + NADPH + H(+). The enzyme catalyses shikimate + ATP = 3-phosphoshikimate + ADP + H(+). It carries out the reaction 3-phosphoshikimate + phosphoenolpyruvate = 5-O-(1-carboxyvinyl)-3-phosphoshikimate + phosphate. Its pathway is metabolic intermediate biosynthesis; chorismate biosynthesis; chorismate from D-erythrose 4-phosphate and phosphoenolpyruvate: step 2/7. The protein operates within metabolic intermediate biosynthesis; chorismate biosynthesis; chorismate from D-erythrose 4-phosphate and phosphoenolpyruvate: step 3/7. It functions in the pathway metabolic intermediate biosynthesis; chorismate biosynthesis; chorismate from D-erythrose 4-phosphate and phosphoenolpyruvate: step 4/7. It participates in metabolic intermediate biosynthesis; chorismate biosynthesis; chorismate from D-erythrose 4-phosphate and phosphoenolpyruvate: step 5/7. Its pathway is metabolic intermediate biosynthesis; chorismate biosynthesis; chorismate from D-erythrose 4-phosphate and phosphoenolpyruvate: step 6/7. Its function is as follows. The AROM polypeptide catalyzes 5 consecutive enzymatic reactions in prechorismate polyaromatic amino acid biosynthesis. This Candida albicans (strain SC5314 / ATCC MYA-2876) (Yeast) protein is Pentafunctional AROM polypeptide.